A 671-amino-acid polypeptide reads, in one-letter code: DNA ligase (671 aa).

NAD(+)-binding positions include aspartate 37–aspartate 41, serine 86–leucine 87, and glutamate 117. Lysine 119 serves as the catalytic N6-AMP-lysine intermediate. Residues arginine 140, glutamate 177, lysine 295, and lysine 319 each contribute to the NAD(+) site. Zn(2+) contacts are provided by cysteine 413, cysteine 416, cysteine 431, and cysteine 437. Positions isoleucine 594–lysine 671 constitute a BRCT domain.

It belongs to the NAD-dependent DNA ligase family. LigA subfamily. Mg(2+) is required as a cofactor. The cofactor is Mn(2+).

The catalysed reaction is NAD(+) + (deoxyribonucleotide)n-3'-hydroxyl + 5'-phospho-(deoxyribonucleotide)m = (deoxyribonucleotide)n+m + AMP + beta-nicotinamide D-nucleotide.. DNA ligase that catalyzes the formation of phosphodiester linkages between 5'-phosphoryl and 3'-hydroxyl groups in double-stranded DNA using NAD as a coenzyme and as the energy source for the reaction. It is essential for DNA replication and repair of damaged DNA. In Polynucleobacter asymbioticus (strain DSM 18221 / CIP 109841 / QLW-P1DMWA-1) (Polynucleobacter necessarius subsp. asymbioticus), this protein is DNA ligase.